The primary structure comprises 469 residues: 3-isopropylmalate dehydratase large subunit (469 aa).

Cys-350, Cys-410, and Cys-413 together coordinate [4Fe-4S] cluster.

It belongs to the aconitase/IPM isomerase family. LeuC type 1 subfamily. In terms of assembly, heterodimer of LeuC and LeuD. [4Fe-4S] cluster is required as a cofactor.

The catalysed reaction is (2R,3S)-3-isopropylmalate = (2S)-2-isopropylmalate. It participates in amino-acid biosynthesis; L-leucine biosynthesis; L-leucine from 3-methyl-2-oxobutanoate: step 2/4. Catalyzes the isomerization between 2-isopropylmalate and 3-isopropylmalate, via the formation of 2-isopropylmaleate. This is 3-isopropylmalate dehydratase large subunit from Brucella abortus (strain S19).